The following is a 361-amino-acid chain: Peroxidase A (361 aa).

Belongs to the peroxidase family. In terms of processing, partially N-glycosylated.

The protein localises to the secreted. It carries out the reaction 2 a phenolic donor + H2O2 = 2 a phenolic radical donor + 2 H2O. The protein is Peroxidase A of Aloe vera (Aloe).